A 449-amino-acid polypeptide reads, in one-letter code: Chromosomal replication initiator protein DnaA (449 aa).

Residues 1–73 (MDADLKNLWD…ANSIKAVCSK (73 aa)) are domain I, interacts with DnaA modulators. The tract at residues 73-110 (KLYTIEFIIMSEIYEKEEIKSSSNQKSKAIVVNDEMSS) is domain II. A domain III, AAA+ region region spans residues 111–327 (TLNPKYTFNS…GALIRIIAYS (217 aa)). ATP-binding residues include Gly155, Gly157, Lys158, and Thr159. The domain IV, binds dsDNA stretch occupies residues 328–449 (SLTNREVTVD…NDITKKLTQN (122 aa)).

It belongs to the DnaA family. Oligomerizes as a right-handed, spiral filament on DNA at oriC.

It localises to the cytoplasm. Its function is as follows. Plays an essential role in the initiation and regulation of chromosomal replication. ATP-DnaA binds to the origin of replication (oriC) to initiate formation of the DNA replication initiation complex once per cell cycle. Binds the DnaA box (a 9 base pair repeat at the origin) and separates the double-stranded (ds)DNA. Forms a right-handed helical filament on oriC DNA; dsDNA binds to the exterior of the filament while single-stranded (ss)DNA is stabiized in the filament's interior. The ATP-DnaA-oriC complex binds and stabilizes one strand of the AT-rich DNA unwinding element (DUE), permitting loading of DNA polymerase. After initiation quickly degrades to an ADP-DnaA complex that is not apt for DNA replication. Binds acidic phospholipids. The sequence is that of Chromosomal replication initiator protein DnaA from Clostridium beijerinckii (strain ATCC 51743 / NCIMB 8052) (Clostridium acetobutylicum).